The chain runs to 495 residues: Serine/threonine-protein phosphatase 2A regulatory subunit sur-6 (495 aa).

The segment at 1–27 is disordered; it reads MVMEVDEPAVAATTSQNQPQEHANDFD. Residues 12–21 are compositionally biased toward polar residues; the sequence is ATTSQNQPQE. WD repeat units lie at residues 64–103, 130–171, 215–253, 264–304, 323–361, and 378–419; these read TEAD…KYVK, EIDE…RKIG, AHTY…ESFN, ELTE…LCDA, EIIA…QPVE, and ENDS…DAKT. A disordered region spans residues 439-459; sequence SAKRKRNNLSSSGETTEEDLS. The stretch at 464 to 495 is one WD 7 repeat; it reads QFDRKILHTAWHPKDNIIALAATNNLYIFSDV.

It belongs to the phosphatase 2A regulatory subunit B family. Part of a complex consisting of a common heterodimeric core enzyme, composed of catalytic subunit let-92 and constant regulatory subunit paa-1, that associates with a variety of regulatory subunits which confer distinct properties to the holoenzyme. Interacts with let-92.

The protein resides in the cytoplasm. In terms of biological role, probable regulatory subunit of serine/threonine phosphatase let-92. Together with let-92 and constant regulatory subunit paa-1, positively regulates centriole duplication during early embryonic cell divisions by preventing the degradation of sas-5 and kinase zyg-1. In addition, during vulva development, may play a role with phosphatase let-92 and regulatory subunit paa-1 in the induction of vulva cell precursors by positively regulating let-60/Ras-MAP kinase signaling, probably by promoting lin-45 activation. In intestinal epithelial cells, may play a role in the late secretory pathway probably by regulating the exocyst, a protein complex involved in targeting secretory vesicles to the plasma membrane. The chain is Serine/threonine-protein phosphatase 2A regulatory subunit sur-6 from Caenorhabditis elegans.